We begin with the raw amino-acid sequence, 897 residues long: Beta-galactosidase (897 aa).

Glu-459 serves as the catalytic Proton donor. Glu-525 acts as the Nucleophile in catalysis.

This sequence belongs to the glycosyl hydrolase 2 family.

It catalyses the reaction Hydrolysis of terminal non-reducing beta-D-galactose residues in beta-D-galactosides.. This is Beta-galactosidase (cbgA) from Clostridium acetobutylicum.